We begin with the raw amino-acid sequence, 735 residues long: Translation initiation factor IF-2 (735 aa).

2 stretches are compositionally biased toward basic and acidic residues: residues 52 to 66 (VNSE…EKPK) and 101 to 117 (KGKE…EKKL). The tract at residues 52–154 (VNSEKKAEKK…PAKKEKELPK (103 aa)) is disordered. The segment covering 121 to 133 (AKKKGKGPMKGKK) has biased composition (basic residues). Positions 134 to 145 (QAAPASKQAQQP) are enriched in low complexity. One can recognise a tr-type G domain in the interval 236–405 (ERPPVVTIMG…LLVSEMEELK (170 aa)). The interval 245 to 252 (GHVDHGKT) is G1. 245 to 252 (GHVDHGKT) provides a ligand contact to GTP. A G2 region spans residues 270–274 (GITQH). The interval 291-294 (DTPG) is G3. Residues 291-295 (DTPGH) and 345-348 (NKMD) each bind GTP. The interval 345 to 348 (NKMD) is G4. A G5 region spans residues 381–383 (SAK).

Belongs to the TRAFAC class translation factor GTPase superfamily. Classic translation factor GTPase family. IF-2 subfamily.

The protein localises to the cytoplasm. Functionally, one of the essential components for the initiation of protein synthesis. Protects formylmethionyl-tRNA from spontaneous hydrolysis and promotes its binding to the 30S ribosomal subunits. Also involved in the hydrolysis of GTP during the formation of the 70S ribosomal complex. The sequence is that of Translation initiation factor IF-2 from Geobacillus thermodenitrificans (strain NG80-2).